Reading from the N-terminus, the 34-residue chain is Photosystem II reaction center protein M (34 aa).

A helical transmembrane segment spans residues 5–25 (ILAFSATALLILFPTALLLIL).

The protein belongs to the PsbM family. As to quaternary structure, PSII is composed of 1 copy each of membrane proteins PsbA, PsbB, PsbC, PsbD, PsbE, PsbF, PsbH, PsbI, PsbJ, PsbK, PsbL, PsbM, PsbT, PsbX, PsbY, PsbZ, Psb30/Ycf12, at least 3 peripheral proteins of the oxygen-evolving complex and a large number of cofactors. It forms dimeric complexes.

Its subcellular location is the plastid membrane. Its function is as follows. One of the components of the core complex of photosystem II (PSII). PSII is a light-driven water:plastoquinone oxidoreductase that uses light energy to abstract electrons from H(2)O, generating O(2) and a proton gradient subsequently used for ATP formation. It consists of a core antenna complex that captures photons, and an electron transfer chain that converts photonic excitation into a charge separation. This subunit is found at the monomer-monomer interface. The sequence is that of Photosystem II reaction center protein M from Cuscuta gronovii (Common dodder).